A 110-amino-acid chain; its full sequence is UPF0339 protein PA0329 (110 aa).

Repeat copies occupy residues 10–58 (AKDG…AFEV) and 61–109 (ANNG…LSDE). Residues 91–110 (EAGVQSVKRATPEAGLSDES) form a disordered region.

The protein belongs to the UPF0339 family. Duplicated subfamily.

The chain is UPF0339 protein PA0329 from Pseudomonas aeruginosa (strain ATCC 15692 / DSM 22644 / CIP 104116 / JCM 14847 / LMG 12228 / 1C / PRS 101 / PAO1).